The sequence spans 143 residues: D-aminoacyl-tRNA deacylase (143 aa).

The short motif at 135-136 is the Gly-cisPro motif, important for rejection of L-amino acids element; that stretch reads GP.

The protein belongs to the DTD family. In terms of assembly, homodimer.

The protein resides in the cytoplasm. The catalysed reaction is glycyl-tRNA(Ala) + H2O = tRNA(Ala) + glycine + H(+). It carries out the reaction a D-aminoacyl-tRNA + H2O = a tRNA + a D-alpha-amino acid + H(+). Its function is as follows. An aminoacyl-tRNA editing enzyme that deacylates mischarged D-aminoacyl-tRNAs. Also deacylates mischarged glycyl-tRNA(Ala), protecting cells against glycine mischarging by AlaRS. Acts via tRNA-based rather than protein-based catalysis; rejects L-amino acids rather than detecting D-amino acids in the active site. By recycling D-aminoacyl-tRNA to D-amino acids and free tRNA molecules, this enzyme counteracts the toxicity associated with the formation of D-aminoacyl-tRNA entities in vivo and helps enforce protein L-homochirality. The polypeptide is D-aminoacyl-tRNA deacylase (Mycolicibacterium smegmatis (strain ATCC 700084 / mc(2)155) (Mycobacterium smegmatis)).